We begin with the raw amino-acid sequence, 143 residues long: D-aminoacyl-tRNA deacylase (143 aa).

Positions 135 to 136 match the Gly-cisPro motif, important for rejection of L-amino acids motif; the sequence is GP.

This sequence belongs to the DTD family. In terms of assembly, homodimer.

Its subcellular location is the cytoplasm. The catalysed reaction is glycyl-tRNA(Ala) + H2O = tRNA(Ala) + glycine + H(+). It carries out the reaction a D-aminoacyl-tRNA + H2O = a tRNA + a D-alpha-amino acid + H(+). An aminoacyl-tRNA editing enzyme that deacylates mischarged D-aminoacyl-tRNAs. Also deacylates mischarged glycyl-tRNA(Ala), protecting cells against glycine mischarging by AlaRS. Acts via tRNA-based rather than protein-based catalysis; rejects L-amino acids rather than detecting D-amino acids in the active site. By recycling D-aminoacyl-tRNA to D-amino acids and free tRNA molecules, this enzyme counteracts the toxicity associated with the formation of D-aminoacyl-tRNA entities in vivo and helps enforce protein L-homochirality. The chain is D-aminoacyl-tRNA deacylase from Mycolicibacterium paratuberculosis (strain ATCC BAA-968 / K-10) (Mycobacterium paratuberculosis).